The sequence spans 192 residues: Peptidyl-tRNA hydrolase (192 aa).

Y16 lines the tRNA pocket. The active-site Proton acceptor is H21. The tRNA site is built by Y66 and N68.

The protein belongs to the PTH family. In terms of assembly, monomer.

Its subcellular location is the cytoplasm. It catalyses the reaction an N-acyl-L-alpha-aminoacyl-tRNA + H2O = an N-acyl-L-amino acid + a tRNA + H(+). In terms of biological role, hydrolyzes ribosome-free peptidyl-tRNAs (with 1 or more amino acids incorporated), which drop off the ribosome during protein synthesis, or as a result of ribosome stalling. Catalyzes the release of premature peptidyl moieties from peptidyl-tRNA molecules trapped in stalled 50S ribosomal subunits, and thus maintains levels of free tRNAs and 50S ribosomes. In Aquifex aeolicus (strain VF5), this protein is Peptidyl-tRNA hydrolase.